Reading from the N-terminus, the 737-residue chain is Alpha-adducin (737 aa).

Met-1 bears the N-acetylmethionine mark. The disordered stretch occupies residues 1 to 21; it reads MNGDSRAAVVTSPPPTTAPHK. Ser-12 bears the Phosphoserine mark. Ser-59 is subject to Phosphoserine; by PKA. The residue at position 64 (Ser-64) is a Phosphoserine. Thr-331 carries the post-translational modification Phosphothreonine. A phosphoserine mark is found at Ser-334, Ser-353, Ser-355, Ser-358, and Ser-366. Ser-408 bears the Phosphoserine; by PKA mark. Disordered stretches follow at residues 421-486 and 576-737; these read FASD…SAVP and RREV…KSDS. The residue at position 427 (Ser-427) is a Phosphoserine. Thr-429 bears the Phosphothreonine mark. At Ser-431 the chain carries Phosphoserine. A Phosphoserine; by PKA modification is found at Ser-436. Thr-445 carries the post-translational modification Phosphothreonine; by ROCK2. Phosphoserine is present on residues Ser-464 and Ser-465. A Phosphothreonine; by ROCK2 modification is found at Thr-480. Residue Ser-481 is modified to Phosphoserine; by PKA. Positions 576-601 are enriched in basic and acidic residues; that stretch reads RREVERKQKGSEENLDEAREQKEKSP. Phosphoserine occurs at positions 586, 600, and 613. Pro residues predominate over residues 602–614; it reads PDQPAVPHPPPST. A Phosphothreonine modification is found at Thr-614. Ser-678, Ser-707, Ser-710, and Ser-714 each carry phosphoserine. Over residues 687–714 the composition is skewed to low complexity; it reads PVAEEAAPSAVEEGAAADPGSDGSPGKS. Positions 715–737 are enriched in basic residues; the sequence is PSKKKKKFRTPSFLKKSKKKSDS. Residue Ser-716 is modified to Phosphoserine; by PKC. An interaction with calmodulin region spans residues 717–734; it reads KKKKKFRTPSFLKKSKKK. Ser-726 carries the phosphoserine; by PKA and PKC modification.

It belongs to the aldolase class II family. Adducin subfamily. As to quaternary structure, heterodimer of an alpha and a beta subunit or an alpha and a gamma subunit. As to expression, expressed in all tissues. Found in much higher levels in reticulocytes than the beta subunit.

It localises to the cytoplasm. Its subcellular location is the cytoskeleton. The protein resides in the cell membrane. In terms of biological role, membrane-cytoskeleton-associated protein that promotes the assembly of the spectrin-actin network. Binds to calmodulin. This chain is Alpha-adducin (ADD1), found in Homo sapiens (Human).